Reading from the N-terminus, the 865-residue chain is High affinity cAMP-specific and IBMX-insensitive 3',5'-cyclic phosphodiesterase 8B (865 aa).

Disordered stretches follow at residues 17–40 (CRDSDESNSPRQTSSVSQGPTAPL) and 52–92 (AMPP…TCRG). Over residues 23-36 (SNSPRQTSSVSQGP) the composition is skewed to polar residues. The span at 75–90 (GSGSSTGSSGPATTTC) shows a compositional bias: low complexity. The PAS domain maps to 247 to 318 (ACNSVFTALD…DTINTCIKKG (72 aa)). Positions 373 to 415 (IHRDSGDNSQTEPHSFRHKSRRKESIDVKSISSRGSDAPSLQN) are disordered. Residues 402 to 415 (SISSRGSDAPSLQN) show a composition bias toward polar residues. Residue serine 497 is modified to Phosphoserine. Residues 519–855 (TINDVPPSIA…KHWKTLDDLK (337 aa)) form the PDEase domain. The active-site Proton donor is the histidine 595. Residues histidine 599, histidine 635, and aspartate 636 each contribute to the a divalent metal cation site. Phosphoserine is present on residues serine 731 and serine 734. A divalent metal cation is bound at residue aspartate 761.

Belongs to the cyclic nucleotide phosphodiesterase family. PDE8 subfamily. A divalent metal cation serves as cofactor. As to expression, widely expressed.

The enzyme catalyses 3',5'-cyclic AMP + H2O = AMP + H(+). Its pathway is purine metabolism; 3',5'-cyclic AMP degradation; AMP from 3',5'-cyclic AMP: step 1/1. In terms of biological role, hydrolyzes the second messenger cAMP, which is a key regulator of many important physiological processes. May be involved in specific signaling in the thyroid gland. The sequence is that of High affinity cAMP-specific and IBMX-insensitive 3',5'-cyclic phosphodiesterase 8B (Pde8b) from Mus musculus (Mouse).